The chain runs to 325 residues: Acetyl-coenzyme A carboxylase carboxyl transferase subunit alpha (325 aa).

Residues 35–292 (EIEKLEARLA…DKVLKRSLKQ (258 aa)) enclose the CoA carboxyltransferase C-terminal domain.

This sequence belongs to the AccA family. In terms of assembly, acetyl-CoA carboxylase is a heterohexamer composed of biotin carboxyl carrier protein (AccB), biotin carboxylase (AccC) and two subunits each of ACCase subunit alpha (AccA) and ACCase subunit beta (AccD).

The protein localises to the cytoplasm. The catalysed reaction is N(6)-carboxybiotinyl-L-lysyl-[protein] + acetyl-CoA = N(6)-biotinyl-L-lysyl-[protein] + malonyl-CoA. The protein operates within lipid metabolism; malonyl-CoA biosynthesis; malonyl-CoA from acetyl-CoA: step 1/1. Component of the acetyl coenzyme A carboxylase (ACC) complex. First, biotin carboxylase catalyzes the carboxylation of biotin on its carrier protein (BCCP) and then the CO(2) group is transferred by the carboxyltransferase to acetyl-CoA to form malonyl-CoA. In Geobacillus sp. (strain WCH70), this protein is Acetyl-coenzyme A carboxylase carboxyl transferase subunit alpha.